A 1203-amino-acid polypeptide reads, in one-letter code: MEKYVRLQKIGEGSFGKAVLVKSTEDGRHYVIKEINISRMSDKERQESRREVAVLANMKHPNIVQYKESFEENGSLYIVMDYCEGGDLFKRINAQKGALFQEDQILDWFVQICLALKHVHDRKILHRDIKSQNIFLTKDGTVQLGDFGIARVLNSTVELARTCIGTPYYLSPEICENKPYNNKSDIWALGCVLYELCTLKHAFEAGNMKNLVLKIISGSFPPVSPHYSYDLRSLLSQLFKRNPRDRPSVNSILEKGFIAKRIEKFLSPQLIAEEFCLKTLSKFGPQPLPGKRPASGQGVSSFVPAQKITKPAAKYGVPLTYKKYGDKKLLEKKPPPKHKQAHQIPVKKMNSGEERKKMSEEAAKKRRLEFIEKEKKQKDQIRFLKAEQMKRQEKQRLERINRAREQGWRNVLRAGGSGEVKASFFGIGGAVSPSPCSPRGQYEHYHAIFDQMQRLRAEDNEARWKGGIYGRWLPERQKGHLAVERANQVEEFLQRKREAMQNKARAEGHVVYLARLRQIRLQNFNERQQIKAKLRGENKEADGTKGQEATEETDMRLKKMESLKAQTNARAAVLKEQLERKRKEAYEREKKVWEEHLVARVKSSDVPLPLELLETGGSPSKQQVKPVISVTSALKEVGLDGSLTDTQEEEMEKSNSAISSKREILRRLNENLKAQEDEKEKQHHSGSCETVGHKDEREYETENAISSDRKKWEMGGQLVIPLDAVTLDTSFSATEKHTVGEVIKLDSNGSPRKVWGKNPTDSVLKILGEAELQLQTELLENTSFKSEVYAEEENYKPLLTEEENLQCISKEINPSATVDSTETKSPKFTEVSPQMSEGNVEEPDDLETEVLQEPSSTHTDGSLPPVLNDVWTREKEAAKETELEDKVAVQQSEVCEDRIPGNVDQSCKDQRDPAVDDSPQSGCDVEKSVQPESIFQKVVHSKDLNLVQAVHCSPEEPIPIRSHSDSPPKTKSKNSLLIGLSTGLFDANNPKMLRTCSLPDLSKLFRTLMDVPTVGDVHQDSLEIDELEDEPIKEGPSDSEDTVFEETDTDLQELQASMEQLLREQPGDEYSEEEESVLKSSDVEQTARGTDAPDEEDNPSSESALNEEWHSDNSDAETTSECEYDSVFNHLEELRLHLEQEMGFEKFFEVYEKVKAIHEDEDENIEICSTIVENILGNEHQHLYAKILHLVMADGAYQEDNDE.

The Protein kinase domain maps to 4 to 258 (YVRLQKIGEG…VNSILEKGFI (255 aa)). ATP-binding positions include 10–18 (IGEGSFGKA) and Lys33. Asp128 (proton acceptor) is an active-site residue. A Phosphothreonine modification is found at Thr156. Thr162 carries the phosphothreonine; by autocatalysis modification. Residues 329 to 357 (LLEKKPPPKHKQAHQIPVKKMNSGEERKK) form a disordered region. A phosphoserine mark is found at Ser417 and Ser437. Thr615 carries the phosphothreonine modification. Ser618 is modified (phosphoserine). 2 disordered regions span residues 643 to 662 (LTDT…SSKR) and 674 to 708 (AQED…ISSD). Residues 674 to 683 (AQEDEKEKQH) are compositionally biased toward basic and acidic residues. Residues Ser750, Ser786, Ser820, and Ser832 each carry the phosphoserine modification. Disordered stretches follow at residues 814–866 (PSAT…LPPV) and 888–925 (AVQQ…GCDV). The span at 839 to 850 (NVEEPDDLETEV) shows a compositional bias: acidic residues. Ser997 bears the Phosphoserine mark. 2 disordered regions span residues 1021–1045 (SLEI…TVFE) and 1063–1120 (REQP…ETTS). Ser1071 carries the phosphoserine modification.

Belongs to the protein kinase superfamily. NEK Ser/Thr protein kinase family. NIMA subfamily. In terms of assembly, binds to CBY2. Found in a complex with CFAP410, NEK1 and SPATA7. Interacts with CFAP410. Interacts (via Ser-997 phosphorylated form) with 14-3-3 proteins. Mg(2+) serves as cofactor. Predominantly in testes (germ cells and Sertoli cells). Lower levels in ovary (oocytes and granulosa cells), thymus and lung.

Its subcellular location is the nucleus. The protein resides in the cytoplasm. The protein localises to the cytoskeleton. It localises to the microtubule organizing center. It is found in the centrosome. It carries out the reaction L-seryl-[protein] + ATP = O-phospho-L-seryl-[protein] + ADP + H(+). It catalyses the reaction L-threonyl-[protein] + ATP = O-phospho-L-threonyl-[protein] + ADP + H(+). Its function is as follows. Phosphorylates serines and threonines, but also appears to possess tyrosine kinase activity. Involved in DNA damage checkpoint control and for proper DNA damage repair. In response to injury that includes DNA damage, NEK1 phosphorylates VDAC1 to limit mitochondrial cell death. May be implicated in the control of meiosis. Involved in cilium assembly. The sequence is that of Serine/threonine-protein kinase Nek1 (Nek1) from Mus musculus (Mouse).